The sequence spans 251 residues: DNA polymerase sliding clamp 2 (251 aa).

This sequence belongs to the PCNA family. As to quaternary structure, heterotrimer. The subunits circularize to form a toroid; DNA passes through its center. Replication factor C (RFC) is required to load the toroid on the DNA.

In terms of biological role, sliding clamp subunit that acts as a moving platform for DNA processing. Responsible for tethering the catalytic subunit of DNA polymerase and other proteins to DNA during high-speed replication. This is DNA polymerase sliding clamp 2 from Aeropyrum pernix (strain ATCC 700893 / DSM 11879 / JCM 9820 / NBRC 100138 / K1).